Consider the following 391-residue polypeptide: Phosphoglycerate kinase (391 aa).

Residues 21–23 (DLN), arginine 36, 59–62 (HLGR), arginine 113, and arginine 146 each bind substrate. ATP-binding positions include lysine 197, glutamate 319, and 345–348 (GGDT).

It belongs to the phosphoglycerate kinase family. Monomer.

The protein resides in the cytoplasm. It carries out the reaction (2R)-3-phosphoglycerate + ATP = (2R)-3-phospho-glyceroyl phosphate + ADP. The protein operates within carbohydrate degradation; glycolysis; pyruvate from D-glyceraldehyde 3-phosphate: step 2/5. This is Phosphoglycerate kinase from Shewanella putrefaciens (strain CN-32 / ATCC BAA-453).